A 346-amino-acid polypeptide reads, in one-letter code: Holliday junction branch migration complex subunit RuvB (346 aa).

A large ATPase domain (RuvB-L) region spans residues 1-182 (MSEPARLISP…FGIPVRLSFY (182 aa)). ATP-binding positions include Leu-21, Arg-22, Gly-63, Lys-66, Thr-67, Thr-68, 129 to 131 (EDF), Arg-172, Tyr-182, and Arg-219. Residue Thr-67 coordinates Mg(2+). The segment at 183-253 (TVEELELIVR…IADEALTRLL (71 aa)) is small ATPAse domain (RuvB-S). Positions 256–346 (NVGFDQLDKR…AQFRLFQEDD (91 aa)) are head domain (RuvB-H). DNA is bound by residues Arg-292, Arg-311, and Arg-316.

Belongs to the RuvB family. Homohexamer. Forms an RuvA(8)-RuvB(12)-Holliday junction (HJ) complex. HJ DNA is sandwiched between 2 RuvA tetramers; dsDNA enters through RuvA and exits via RuvB. An RuvB hexamer assembles on each DNA strand where it exits the tetramer. Each RuvB hexamer is contacted by two RuvA subunits (via domain III) on 2 adjacent RuvB subunits; this complex drives branch migration. In the full resolvosome a probable DNA-RuvA(4)-RuvB(12)-RuvC(2) complex forms which resolves the HJ.

Its subcellular location is the cytoplasm. It catalyses the reaction ATP + H2O = ADP + phosphate + H(+). In terms of biological role, the RuvA-RuvB-RuvC complex processes Holliday junction (HJ) DNA during genetic recombination and DNA repair, while the RuvA-RuvB complex plays an important role in the rescue of blocked DNA replication forks via replication fork reversal (RFR). RuvA specifically binds to HJ cruciform DNA, conferring on it an open structure. The RuvB hexamer acts as an ATP-dependent pump, pulling dsDNA into and through the RuvAB complex. RuvB forms 2 homohexamers on either side of HJ DNA bound by 1 or 2 RuvA tetramers; 4 subunits per hexamer contact DNA at a time. Coordinated motions by a converter formed by DNA-disengaged RuvB subunits stimulates ATP hydrolysis and nucleotide exchange. Immobilization of the converter enables RuvB to convert the ATP-contained energy into a lever motion, pulling 2 nucleotides of DNA out of the RuvA tetramer per ATP hydrolyzed, thus driving DNA branch migration. The RuvB motors rotate together with the DNA substrate, which together with the progressing nucleotide cycle form the mechanistic basis for DNA recombination by continuous HJ branch migration. Branch migration allows RuvC to scan DNA until it finds its consensus sequence, where it cleaves and resolves cruciform DNA. The polypeptide is Holliday junction branch migration complex subunit RuvB (Rhizobium etli (strain CIAT 652)).